Consider the following 265-residue polypeptide: Undecaprenyl-diphosphatase (265 aa).

Transmembrane regions (helical) follow at residues arginine 38–leucine 58, arginine 75–valine 95, proline 108–glycine 128, valine 135–proline 155, phenylalanine 181–methionine 201, valine 215–serine 235, and valine 244–alanine 264.

It belongs to the UppP family.

Its subcellular location is the cell inner membrane. It catalyses the reaction di-trans,octa-cis-undecaprenyl diphosphate + H2O = di-trans,octa-cis-undecaprenyl phosphate + phosphate + H(+). Its function is as follows. Catalyzes the dephosphorylation of undecaprenyl diphosphate (UPP). Confers resistance to bacitracin. The chain is Undecaprenyl-diphosphatase from Xanthomonas oryzae pv. oryzae (strain MAFF 311018).